The primary structure comprises 71 residues: uncharacterized protein (71 aa).

This is an uncharacterized protein from Haemophilus influenzae (strain ATCC 51907 / DSM 11121 / KW20 / Rd).